Consider the following 466-residue polypeptide: Asparagine--tRNA ligase (466 aa).

The protein belongs to the class-II aminoacyl-tRNA synthetase family. Homodimer.

The protein resides in the cytoplasm. The catalysed reaction is tRNA(Asn) + L-asparagine + ATP = L-asparaginyl-tRNA(Asn) + AMP + diphosphate + H(+). The chain is Asparagine--tRNA ligase from Escherichia coli O139:H28 (strain E24377A / ETEC).